The chain runs to 601 residues: Glutathione-regulated potassium-efflux system protein KefB (601 aa).

The next 13 helical transmembrane spans lie at 4-24 (ADLL…VPLA), 29-49 (IGAV…GLGF), 55-75 (EILH…GLEL), 87-107 (IFGV…GLLM), 111-131 (FLWQ…TAMA), 152-172 (VLLF…LLAG), 177-197 (HFDW…LIGG), 207-227 (FIAA…LVLS), 230-250 (LFMD…GVLL), 262-282 (AIDP…GMSL), 284-304 (LGVL…LVVI), 324-344 (MQFA…FSTA), and 356-376 (ALLL…MKGI). The 120-residue stretch at 400–519 (KPQVIVVGFG…AGVTQFSRET (120 aa)) folds into the RCK N-terminal domain.

This sequence belongs to the monovalent cation:proton antiporter 2 (CPA2) transporter (TC 2.A.37) family. KefB subfamily. In terms of assembly, interacts with the regulatory subunit KefG.

Its subcellular location is the cell inner membrane. Functionally, pore-forming subunit of a potassium efflux system that confers protection against electrophiles. Catalyzes K(+)/H(+) antiport. This chain is Glutathione-regulated potassium-efflux system protein KefB, found in Salmonella dublin (strain CT_02021853).